The chain runs to 270 residues: MASRGVVGIFFLSAVPLVCLELRRGIPDIGIKDFLLLCGRILLLLALLTLIISVTTSWLNSFKSPQVYLKEEEEKNEKRQKLVRKKQQEAQGEKASRYIENVLKPHQEMKLRKLEERFYQMTGEAWKLSSGHKLGGDEGTSQTSFETSNREAAKSQNLPKPLTEFPSPAEQPTCKEIPDLPEEPSQTAEEVVTVALRCPSGNVLRRRFLKSYSSQVLFDWMTRIGYHISLYSLSTSFPRRPLAVEGGQSLEDIGITVDTVLILEEKEQTN.

Residue M1 is a topological domain, cytoplasmic. A helical membrane pass occupies residues 2-22 (ASRGVVGIFFLSAVPLVCLEL). Over 23-33 (RRGIPDIGIKD) the chain is Lumenal. Residues 34-54 (FLLLCGRILLLLALLTLIISV) form a helical membrane-spanning segment. Over 55–270 (TTSWLNSFKS…LILEEKEQTN (216 aa)) the chain is Cytoplasmic. The segment at 130–171 (SGHKLGGDEGTSQTSFETSNREAAKSQNLPKPLTEFPSPAEQ) is disordered. S167 bears the Phosphoserine mark. A UBX domain is found at 187 to 263 (TAEEVVTVAL…GITVDTVLIL (77 aa)).

In terms of assembly, interacts with SYVN1 and VCP. In terms of tissue distribution, expressed abundantly in ovary and testis, and weakly in all other tissues tested.

It localises to the endoplasmic reticulum membrane. Involved in endoplasmic reticulum-associated degradation (ERAD) for misfolded lumenal proteins, possibly by tethering VCP to the endoplasmic reticulum membrane. May play a role in reproduction. The protein is UBX domain-containing protein 8 (UBXN8) of Homo sapiens (Human).